We begin with the raw amino-acid sequence, 189 residues long: Large ribosomal subunit protein bL9 (189 aa).

The protein belongs to the bacterial ribosomal protein bL9 family.

In terms of biological role, binds to the 23S rRNA. In Brucella anthropi (strain ATCC 49188 / DSM 6882 / CCUG 24695 / JCM 21032 / LMG 3331 / NBRC 15819 / NCTC 12168 / Alc 37) (Ochrobactrum anthropi), this protein is Large ribosomal subunit protein bL9.